The primary structure comprises 91 residues: Phosphocarrier protein NPr (91 aa).

The 88-residue stretch at 3-90 folds into the HPr domain; sequence KLERQVTICN…ALVDAKFDEA (88 aa). H17 serves as the catalytic Pros-phosphohistidine intermediate.

The protein belongs to the HPr family.

It localises to the cytoplasm. In terms of biological role, component of the phosphoenolpyruvate-dependent nitrogen-metabolic phosphotransferase system (nitrogen-metabolic PTS), that seems to be involved in regulating nitrogen metabolism. The phosphoryl group from phosphoenolpyruvate (PEP) is transferred to the phosphoryl carrier protein NPr by enzyme I-Ntr. Phospho-NPr then transfers it to EIIA-Ntr. Could function in the transcriptional regulation of sigma-54 dependent operons in conjunction with the NPr (PtsO) and EIIA-Ntr (PtsN) proteins. The protein is Phosphocarrier protein NPr (ptsO) of Shewanella violacea (strain JCM 10179 / CIP 106290 / LMG 19151 / DSS12).